A 138-amino-acid chain; its full sequence is Nucleoside diphosphate kinase (138 aa).

ATP is bound by residues Lys10, Phe58, Arg86, Thr92, Arg103, and Asn113. His116 acts as the Pros-phosphohistidine intermediate in catalysis.

The protein belongs to the NDK family. As to quaternary structure, homotetramer. Mg(2+) is required as a cofactor.

It localises to the cytoplasm. It catalyses the reaction a 2'-deoxyribonucleoside 5'-diphosphate + ATP = a 2'-deoxyribonucleoside 5'-triphosphate + ADP. The catalysed reaction is a ribonucleoside 5'-diphosphate + ATP = a ribonucleoside 5'-triphosphate + ADP. In terms of biological role, major role in the synthesis of nucleoside triphosphates other than ATP. The ATP gamma phosphate is transferred to the NDP beta phosphate via a ping-pong mechanism, using a phosphorylated active-site intermediate. This is Nucleoside diphosphate kinase from Actinobacillus pleuropneumoniae serotype 7 (strain AP76).